The chain runs to 347 residues: S-adenosylmethionine decarboxylase proenzyme (347 aa).

Catalysis depends on residues glutamate 10 and glutamate 13. The active-site Schiff-base intermediate with substrate; via pyruvic acid is the serine 66. Serine 66 bears the Pyruvic acid (Ser); by autocatalysis mark. The active-site Proton donor; for catalytic activity is cysteine 80. Catalysis depends on proton acceptor; for processing activity residues serine 237 and histidine 251.

This sequence belongs to the eukaryotic AdoMetDC family. Pyruvate serves as cofactor. Is synthesized initially as an inactive proenzyme. Formation of the active enzyme involves a self-maturation process in which the active site pyruvoyl group is generated from an internal serine residue via an autocatalytic post-translational modification. Two non-identical subunits are generated from the proenzyme in this reaction, and the pyruvate is formed at the N-terminus of the alpha chain, which is derived from the carboxyl end of the proenzyme. The post-translation cleavage follows an unusual pathway, termed non-hydrolytic serinolysis, in which the side chain hydroxyl group of the serine supplies its oxygen atom to form the C-terminus of the beta chain, while the remainder of the serine residue undergoes an oxidative deamination to produce ammonia and the pyruvoyl group blocking the N-terminus of the alpha chain.

The enzyme catalyses S-adenosyl-L-methionine + H(+) = S-adenosyl 3-(methylsulfanyl)propylamine + CO2. It participates in amine and polyamine biosynthesis; S-adenosylmethioninamine biosynthesis; S-adenosylmethioninamine from S-adenosyl-L-methionine: step 1/1. The sequence is that of S-adenosylmethionine decarboxylase proenzyme (SamDC) from Drosophila melanogaster (Fruit fly).